The chain runs to 178 residues: ATP-dependent protease subunit HslV (178 aa).

Threonine 5 is an active-site residue. Glycine 161, cysteine 164, and threonine 167 together coordinate Na(+).

This sequence belongs to the peptidase T1B family. HslV subfamily. As to quaternary structure, a double ring-shaped homohexamer of HslV is capped on each side by a ring-shaped HslU homohexamer. The assembly of the HslU/HslV complex is dependent on binding of ATP.

It localises to the cytoplasm. It catalyses the reaction ATP-dependent cleavage of peptide bonds with broad specificity.. With respect to regulation, allosterically activated by HslU binding. Functionally, protease subunit of a proteasome-like degradation complex believed to be a general protein degrading machinery. In Nitratiruptor sp. (strain SB155-2), this protein is ATP-dependent protease subunit HslV.